The following is a 345-amino-acid chain: MENTASAAPPSSEDLVVDTKENAEPPFCGISLSGSSQAPFHPQSPTLQQDERDELILQQSGEQQLGNSGELRQEEELPKTRRGGWTKGRKRKRSPRDNNAPKAPLTGYVRFMNERREQLRTERPDVPFPEITRIVGSEWSKLPAHEKQHYLDEAEKDKERYTKELQQYQNTDAYQTYSRKAQSRQKGRQQRQEGVRGVPINTEKESILKERPIFDIPIFTEEFLNHSKAREAELRQLRKSNMEFEERNAALQKHVESMRSAVQRLEAELNQEQERNSLLQQHLQSVRQALTHCLQSVPIPGTTEIPTLETIDLYMSRLQNAVLTHPKESEVIISGVREVLSQLEG.

Disordered regions lie at residues 1–124 (MENT…TERP) and 167–198 (QYQN…VRGV). Composition is skewed to polar residues over residues 32–48 (LSGS…PTLQ) and 57–67 (LQQSGEQQLGN). A compositionally biased stretch (basic residues) spans 80–94 (TRRGGWTKGRKRKRS). Positions 101–169 (PKAPLTGYVR…RYTKELQQYQ (69 aa)) form a DNA-binding region, HMG box. The segment covering 112 to 124 (MNERREQLRTERP) has biased composition (basic and acidic residues). A compositionally biased stretch (polar residues) spans 167–180 (QYQNTDAYQTYSRK). Positions 227–290 (SKAREAELRQ…QHLQSVRQAL (64 aa)) form a coiled coil.

Its subcellular location is the nucleus. Functionally, plays a role in neuronal differentiation. The polypeptide is High mobility group protein 20A (hmg20a) (Xenopus tropicalis (Western clawed frog)).